Here is a 142-residue protein sequence, read N- to C-terminus: Hemoglobin subunit alpha-I/II (142 aa).

Positions 2-142 (VLSAADKGNV…VSTVLTSKYR (141 aa)) constitute a Globin domain. A Phosphoserine modification is found at serine 4. N6-succinyllysine is present on residues lysine 8 and lysine 12. At lysine 17 the chain carries N6-acetyllysine; alternate. Lysine 17 carries the post-translational modification N6-succinyllysine; alternate. Phosphotyrosine is present on tyrosine 25. Serine 36 is subject to Phosphoserine. Lysine 41 is modified (N6-succinyllysine). Residue serine 50 is modified to Phosphoserine. Residue histidine 59 participates in O2 binding. Histidine 88 serves as a coordination point for heme b. Serine 103 bears the Phosphoserine mark. Position 109 is a phosphothreonine (threonine 109). Position 125 is a phosphoserine (serine 125). 2 positions are modified to phosphothreonine: threonine 135 and threonine 138. Phosphoserine is present on serine 139.

This sequence belongs to the globin family. Heterotetramer of two alpha chains and two beta chains. In terms of tissue distribution, red blood cells.

Involved in oxygen transport from the lung to the various peripheral tissues. In Bison bonasus (European bison), this protein is Hemoglobin subunit alpha-I/II.